A 132-amino-acid polypeptide reads, in one-letter code: Small ribosomal subunit protein uS8c (132 aa).

Belongs to the universal ribosomal protein uS8 family. Part of the 30S ribosomal subunit.

The protein localises to the plastid. It is found in the chloroplast. Functionally, one of the primary rRNA binding proteins, it binds directly to 16S rRNA central domain where it helps coordinate assembly of the platform of the 30S subunit. This chain is Small ribosomal subunit protein uS8c (rps8), found in Liriodendron tulipifera (Tuliptree).